Reading from the N-terminus, the 279-residue chain is Phospholipase A and acyltransferase 5 (279 aa).

Disordered regions lie at residues Met-1 to Ser-53 and Gln-70 to Gly-117. Positions Leu-97–Asp-106 are enriched in polar residues. In terms of domain architecture, LRAT spans Leu-135 to Gln-249. Catalysis depends on residues His-145 and His-157. The Acyl-thioester intermediate role is filled by Cys-233.

Belongs to the H-rev107 family. In terms of tissue distribution, highest expression level in testis and pancreas.

It is found in the cytoplasm. The protein localises to the cytosol. It carries out the reaction a 1,2-diacyl-sn-glycero-3-phosphocholine + H2O = a 1-acyl-sn-glycero-3-phosphocholine + a fatty acid + H(+). The enzyme catalyses a 1,2-diacyl-sn-glycero-3-phosphocholine + H2O = a 2-acyl-sn-glycero-3-phosphocholine + a fatty acid + H(+). It catalyses the reaction 1-hexadecanoyl-2-(5Z,8Z,11Z,14Z-eicosatetraenoyl)-sn-glycero-3-phosphocholine + 1,2-di-(9Z-octadecenoyl)-sn-glycero-3-phosphoethanolamine = N-(5Z,8Z,11Z,14Z-eicosatetraenoyl)-1,2-di-(9Z-octadecenoyl)-sn-glycero-3-phosphoethanolamine + 1-hexadecanoyl-sn-glycero-3-phosphocholine + H(+). The catalysed reaction is 1,2-di-(9Z-octadecenoyl)-sn-glycero-3-phosphoethanolamine + 1,2-dihexadecanoyl-sn-glycero-3-phosphocholine = N-hexadecanoyl-1,2-di-(9Z-octadecenoyl)-sn-glycero-3-phosphoethanolamine + 1-hexadecanoyl-sn-glycero-3-phosphocholine + H(+). It carries out the reaction 1,2-di-(9Z-octadecenoyl)-sn-glycero-3-phosphoethanolamine + 1,2-dihexadecanoyl-sn-glycero-3-phosphocholine = N-hexadecanoyl-1,2-di-(9Z-octadecenoyl)-sn-glycero-3-phosphoethanolamine + 2-hexadecanoyl-sn-glycero-3-phosphocholine + H(+). The enzyme catalyses a 1,2-diacyl-sn-glycero-3-phosphoethanolamine + a 1,2-diacyl-sn-glycero-3-phosphocholine = an N-acyl-1,2-diacyl-sn-glycero-3-phosphoethanolamine + a 1-acyl-sn-glycero-3-phosphocholine + H(+). It catalyses the reaction a 1,2-diacyl-sn-glycero-3-phosphoethanolamine + a 1,2-diacyl-sn-glycero-3-phosphocholine = an N-acyl-1,2-diacyl-sn-glycero-3-phosphoethanolamine + a 2-acyl-sn-glycero-3-phosphocholine + H(+). The catalysed reaction is 1-hexadecanoyl-2-(9Z-octadecenoyl)-sn-glycero-3-phosphocholine + 1,2-di-(9Z-octadecenoyl)-sn-glycero-3-phosphoethanolamine = N,1,2-tri-(9Z-octadecenoyl)-sn-glycero-3-phosphoethanolamine + 1-hexadecanoyl-sn-glycero-3-phosphocholine + H(+). Functionally, exhibits both phospholipase A1/2 and acyltransferase activities. Shows phospholipase A1 (PLA1) and A2 (PLA2) activity, catalyzing the calcium-independent release of fatty acids from the sn-1 or sn-2 position of glycerophospholipids. Shows N-acyltransferase activity, catalyzing the calcium-independent transfer of a fatty acyl group at the sn-1 position of phosphatidylcholine (PC) and other glycerophospholipids to the primary amine of phosphatidylethanolamine (PE), forming N-acylphosphatidylethanolamine (NAPE), which serves as precursor for N-acylethanolamines (NAEs). In Homo sapiens (Human), this protein is Phospholipase A and acyltransferase 5.